We begin with the raw amino-acid sequence, 365 residues long: Transcription factor TCP2 (365 aa).

A TCP domain is found at 42-100 (GKDRHSKVLTSKGPRDRRVRLSVSTALQFYDLQDRLGYDQPSKAVEWLIKAAEDSISEL). A compositionally biased stretch (low complexity) spans 130-150 (KSACSSNSDTSKNSSGLSLSR). 2 disordered regions span residues 130–202 (KSAC…SAPS) and 220–245 (QTHFPISTNSHPFSSISDHHHHHPHH). One can recognise a R domain in the interval 151 to 172 (SELRDKARERARERTAKETKER). The span at 151-176 (SELRDKARERARERTAKETKERDHNH) shows a compositional bias: basic and acidic residues. Polar residues predominate over residues 177 to 202 (TSFTDLLNSGSDPVNSNRQWMASAPS).

As to quaternary structure, interacts with SPL. Interacts with CRY1. In terms of tissue distribution, expressed in cotyledons, particularly in the vascular region, in leaves, roots, buds, flowers and immature siliques.

Its subcellular location is the nucleus. Functionally, plays a pivotal role in the control of morphogenesis of shoot organs by negatively regulating the expression of boundary-specific genes such as CUC genes, probably through the induction of miRNA (e.g. miR164). Participates in ovule development. Promotes light-regulated transcription of CHS, CAB, HYH and HY5. Positively regulates photomorphogenesis (e.g. hypocotyl elongation inhibition and cotyledon opening in response to blue light). This Arabidopsis thaliana (Mouse-ear cress) protein is Transcription factor TCP2.